The primary structure comprises 318 residues: Protein-methionine-sulfoxide reductase catalytic subunit MsrP (318 aa).

The segment at residues 1 to 40 (MNRFTRYDVTPEAIFNQRRQIIKAMGLGAAALSLPNIGFA) is a signal peptide (tat-type signal). Mo-molybdopterin is bound by residues N72, 75–76 (YE), C130, T165, N217, R222, and 233–235 (SIK).

This sequence belongs to the MsrP family. In terms of assembly, heterodimer of a catalytic subunit (MsrP) and a heme-binding subunit (MsrQ). Mo-molybdopterin is required as a cofactor. Predicted to be exported by the Tat system. The position of the signal peptide cleavage has not been experimentally proven.

The protein localises to the periplasm. It catalyses the reaction L-methionyl-[protein] + a quinone + H2O = L-methionyl-(S)-S-oxide-[protein] + a quinol. The enzyme catalyses L-methionyl-[protein] + a quinone + H2O = L-methionyl-(R)-S-oxide-[protein] + a quinol. Functionally, part of the MsrPQ system that repairs oxidized periplasmic proteins containing methionine sulfoxide residues (Met-O), using respiratory chain electrons. Thus protects these proteins from oxidative-stress damage caused by reactive species of oxygen and chlorine generated by the host defense mechanisms. MsrPQ is essential for the maintenance of envelope integrity under bleach stress, rescuing a wide series of structurally unrelated periplasmic proteins from methionine oxidation. The catalytic subunit MsrP is non-stereospecific, being able to reduce both (R-) and (S-) diastereoisomers of methionine sulfoxide. This Actinobacillus pleuropneumoniae serotype 5b (strain L20) protein is Protein-methionine-sulfoxide reductase catalytic subunit MsrP.